Here is a 635-residue protein sequence, read N- to C-terminus: GTPase-GDP dissociation stimulator vimar (635 aa).

ARM repeat units lie at residues 72 to 118, 346 to 391, 392 to 432, and 510 to 550; these read KSEV…NICY, TDSH…NLVI, PKPN…MTVD, and RSSL…ILSV.

As to quaternary structure, interacts with Miro.

The protein localises to the endoplasmic reticulum. It is found in the mitochondrion. It localises to the cytoplasm. Its subcellular location is the cytosol. Functionally, probably acts as a GEF (guanine nucleotide exchange factor) for the Rho family of small GTP-binding proteins (G proteins) that stimulates the dissociation of GDP to enable subsequent binding of GTP. May also chaperone the processing and/or trafficking of small GTPases independently of GEF activity. By interacting with Miro, promotes mitochondrial fission in response to high calcium concentrations. The chain is GTPase-GDP dissociation stimulator vimar from Drosophila melanogaster (Fruit fly).